Consider the following 268-residue polypeptide: Phosphatidylglycerol--prolipoprotein diacylglyceryl transferase (268 aa).

Helical transmembrane passes span I23–A43, L62–Y82, V97–W117, F132–L152, S179–I199, A206–V226, and G241–S261. R145 contacts a 1,2-diacyl-sn-glycero-3-phospho-(1'-sn-glycerol).

It belongs to the Lgt family.

The protein resides in the cell inner membrane. The catalysed reaction is L-cysteinyl-[prolipoprotein] + a 1,2-diacyl-sn-glycero-3-phospho-(1'-sn-glycerol) = an S-1,2-diacyl-sn-glyceryl-L-cysteinyl-[prolipoprotein] + sn-glycerol 1-phosphate + H(+). It participates in protein modification; lipoprotein biosynthesis (diacylglyceryl transfer). Functionally, catalyzes the transfer of the diacylglyceryl group from phosphatidylglycerol to the sulfhydryl group of the N-terminal cysteine of a prolipoprotein, the first step in the formation of mature lipoproteins. This is Phosphatidylglycerol--prolipoprotein diacylglyceryl transferase from Haemophilus influenzae (strain 86-028NP).